Reading from the N-terminus, the 86-residue chain is Toxin To8 (86 aa).

The N-terminal stretch at 1 to 20 (MTRFVLFISCFFLIGMVVEC) is a signal peptide. The region spanning 21-83 (KEGYLLGSRG…LWESDTNECG (63 aa)) is the LCN-type CS-alpha/beta domain. 4 disulfide bridges follow: C31–C82, C35–C57, C43–C63, and C47–C65. C82 carries the cysteine amide modification.

The protein belongs to the long (4 C-C) scorpion toxin superfamily. Sodium channel inhibitor family. Beta subfamily. Expressed by the venom gland.

The protein localises to the secreted. Beta toxins bind voltage-independently at site-4 of sodium channels (Nav) and shift the voltage of activation toward more negative potentials thereby affecting sodium channel activation and promoting spontaneous and repetitive firing. The protein is Toxin To8 of Tityus obscurus (Amazonian scorpion).